The primary structure comprises 261 residues: Monopolin complex subunit pcs1 (261 aa).

Residues 1-42 (MRKNNMQTSKDSELKEQAKGKSSKLIHKLPKQRTRISQGQMH) form a disordered region. Over residues 10-19 (KDSELKEQAK) the composition is skewed to basic and acidic residues. Over residues 21–34 (KSSKLIHKLPKQRT) the composition is skewed to basic residues. Positions 91–170 (HTQEQEFNEL…EQIKNYSKIN (80 aa)) form a coiled coil.

In terms of assembly, component of a monopolin-like complex composed of pcs1 and mde4. The complex associates with the kinetochore.

It localises to the nucleus. Its subcellular location is the nucleolus. The protein resides in the chromosome. It is found in the centromere. The monopolin-like pcs1/mde4 complex is essential for accurate chromosome segregation during mitosis and meiosis II. May clamp together microtubule binding sites on the same kinetochore, preventing merotelic attachment of microtubules. In contrast to its S.cerevisiae ortholog CSM1, is not required ofr mono-orientation during meiosis I. This Schizosaccharomyces pombe (strain 972 / ATCC 24843) (Fission yeast) protein is Monopolin complex subunit pcs1 (pcs1).